We begin with the raw amino-acid sequence, 238 residues long: MAQVSMRDMLNAGVHYGHQTRYWNPKMKPFIFGARNGVHVINLEKTLPLFNEALAELTRISSNNGKVLFVGTKRAASEAVKAAAVDCQQFYVNHRWLGGMLTNWKTVRQSIKRLKDLEAQTQDGTFDKITKKEALMRTRELEKLELSLGGIKDMAGLPDAIFVIGADHEHIAIKEANNLGIPVFAIVDTNSTPDGINYIIPGNDDATRAIQLYLDAASAAVKEGRGSNVEAELQIPAE.

The protein belongs to the universal ribosomal protein uS2 family.

The chain is Small ribosomal subunit protein uS2 from Haemophilus ducreyi (strain 35000HP / ATCC 700724).